Reading from the N-terminus, the 1296-residue chain is Clustered mitochondria protein homolog (1296 aa).

The tract at residues 1–31 is disordered; sequence MTLMNGDGAHEHQAEAEPKQNGHEMGDQTEE. A compositionally biased stretch (basic and acidic residues) spans 8 to 26; sequence GAHEHQAEAEPKQNGHEMG. Positions 333 to 575 constitute a Clu domain; the sequence is RAEDAYTSRL…RTFPPDLNFL (243 aa). Positions 662–689 form a coiled coil; it reads LDGEAQLKQLEETMAAHKETVDTRSKEV. TPR repeat units follow at residues 970–1003, 1012–1045, 1096–1129, and 1138–1171; these read AFHFFQSGQAKVQQGYLKEGCELINEALNLFNNV, CACLRLLARLNYIMGDYSEALSNQQKAVLMSERI, ALLDSNIGLVLHGVMEYDLSLRFLENALTINSKY, and ALSHHLVARVYETKGEFRSALQHEKDGYTIYKNQ. A coiled-coil region spans residues 1242–1274; it reads QKDLEHLKAEVQRRQQLQEAIKGAENHEAKTKE. The tract at residues 1261-1296 is disordered; that stretch reads AIKGAENHEAKTKEPEMSETSDSNINAASVAPESSD. The segment covering 1263–1276 has biased composition (basic and acidic residues); sequence KGAENHEAKTKEPE. Positions 1278-1296 are enriched in polar residues; it reads SETSDSNINAASVAPESSD.

This sequence belongs to the CLU family.

Its subcellular location is the cytoplasm. The protein localises to the cytoplasmic granule. MRNA-binding protein involved in proper cytoplasmic distribution of mitochondria. Specifically binds mRNAs of nuclear-encoded mitochondrial proteins in the cytoplasm and regulates transport or translation of these transcripts close to mitochondria, playing a role in mitochondrial biogenesis. In Xenopus tropicalis (Western clawed frog), this protein is Clustered mitochondria protein homolog.